The sequence spans 387 residues: MLAQEVQQVLAAGTDDASACQISNMTAYEMEKGRKIVGLTKGATESFVVPRLSPLNSTGGEQWAFDGVSEDGVKSFMFGFYRDPNYSILGAGNFRLSLEFGFANRERVAELYYAERTVIETCPQGVRGVWYSESEGWHHSFLIKADMSEAVITLNSDSLKGTITYKSKSLPIAADGHVWPNGNATTEPVRYLHWSEPIPAGTVEFDVEIKGKKATWKGIGGHERFWTAFSWFTCLTNLQGLRAMAGPYVLSFFRFESGLDEGHVHQSAVLFKDGVQIFRSTLGAESDTEDYVLAQKTYGGAVTGDLKDKVTGFQVELVSPSKKQHYTFFIEHKNLAFEYLLGEGVGGSGFSAIAKGGHVGQLQYEGPSLTEALTFPKNSPLFKSNYV.

This sequence belongs to the Diels-Alderase family.

It functions in the pathway secondary metabolite biosynthesis. Functionally, diels-Alderase; part of the gene cluster that mediates the biosynthesis of a tyrosine-derived cytochalasan acting as a fungal signal recognized by resistant rice plants and leads to avirulence in Pi33 resistant rice cultivars. The first step in the pathway is catalyzed by the hybrid PKS-NRPS ACE1, assisted by the enoyl reductase RAP1, that are responsible for fusion of the tyrosine precursor and the polyketide backbone. The polyketide synthase module (PKS) of ACE1 is responsible for the synthesis of the polyketide backbone and the downstream nonribosomal peptide synthetase (NRPS) amidates the carboxyl end of the polyketide with the tyrosine precursor. Because ACE1 lacks a designated enoylreductase (ER) domain, the required activity is provided the enoyl reductase RAP1. Reduction by the hydrolyase ORFZ, followed by dehydration and intra-molecular Diels-Alder cyclization by the Diels-Alderase ORF3 then yield the required isoindolone-fused macrocycle. A number of oxidative steps catalyzed by the tailoring enzymes identified within the cluster, including cytochrome P450 monooxygenases CYP1 to CYP4, the FAD-linked oxidoreductase OXR2 and the short-chain dehydrogenase/reductase OXR1, are further required to afford the final cytochalasans that confer avirulence and which have still to be identified. The monooxygenase CYP1 has been shown to be a site-selective C-18 hydroxylase whereas the function of CYP3 is the site-selective epoxidation of the C-6/C-7 olefin that is present in some intermediate compounds. Finally, SYN2 and RAP2 are not required for avirulence in Pi33 resistant rice cultivars. This chain is Diels-Alderase ORF3, found in Pyricularia oryzae (strain 70-15 / ATCC MYA-4617 / FGSC 8958) (Rice blast fungus).